Here is a 141-residue protein sequence, read N- to C-terminus: MADDLVDGLTRAGLPGAKASARYVRVSPTKARRVVDLVRGRSVGEALDILRFAPQAASEDVYKVVASAAANAENNHSLDPATLWVGEVYVDEGPTLKRIRPRAQGRAYRIRKRTSHITVVVESREPVSAAGRGAKTTRRAR.

This sequence belongs to the universal ribosomal protein uL22 family. As to quaternary structure, part of the 50S ribosomal subunit.

In terms of biological role, this protein binds specifically to 23S rRNA; its binding is stimulated by other ribosomal proteins, e.g. L4, L17, and L20. It is important during the early stages of 50S assembly. It makes multiple contacts with different domains of the 23S rRNA in the assembled 50S subunit and ribosome. Its function is as follows. The globular domain of the protein is located near the polypeptide exit tunnel on the outside of the subunit, while an extended beta-hairpin is found that lines the wall of the exit tunnel in the center of the 70S ribosome. The polypeptide is Large ribosomal subunit protein uL22 (Frankia casuarinae (strain DSM 45818 / CECT 9043 / HFP020203 / CcI3)).